Reading from the N-terminus, the 429-residue chain is Keratin, type I cytoskeletal 20 (429 aa).

A disordered region spans residues 1–26 (MDFSRRSFHRSLSSSSQGPALSTSGS). The tract at residues 1–74 (MDFSRRSFHR…SNGGDLFGGN (74 aa)) is head. The segment covering 10 to 26 (RSLSSSSQGPALSTSGS) has biased composition (low complexity). A phosphoserine mark is found at S13, S16, and S26. The interval 75-110 (EKLAMQNLNDRLASYLEKVRSLEQSNSKLEAQIKQW) is coil 1A. Positions 75–386 (EKLAMQNLND…RLLEGEDIKT (312 aa)) constitute an IF rod domain. The interval 111–128 (YETNAPSTIRDYSSYYAQ) is linker 1. Positions 129-220 (IKELQDQIKD…KEHQEEVEVL (92 aa)) are coil 1B. The linker 12 stretch occupies residues 221-243 (RRQLGNNVNVEVDAAPGLNLGEI). Positions 244-382 (MNEMRQKYEI…ATYRRLLEGE (139 aa)) are coil 2. Residues 383-429 (DIKTTEYQLNTLEAKDIKKTRKIKTVVEEVVDGKVVSSEVKEIEENI) form a tail region.

It belongs to the intermediate filament family. Heterotetramer of two type I and two type II keratins. Associates with KRT8. In terms of processing, hyperphosphorylation at Ser-13 occurs during the early stages of apoptosis but becomes less prominent during the later stages. Phosphorylation at Ser-13 also increases in response to stress brought on by cell injury. Proteolytically cleaved by caspases during apoptosis. Cleavage occurs at Asp-233. Expressed predominantly in the intestinal epithelium in differentiated villus cells.

Its function is as follows. Plays a significant role in maintaining keratin filament organization in intestinal epithelia. When phosphorylated, plays a role in the secretion of mucin in the small intestine. The sequence is that of Keratin, type I cytoskeletal 20 (Krt20) from Rattus norvegicus (Rat).